The chain runs to 847 residues: Pollen-specific leucine-rich repeat extensin-like protein 2 (847 aa).

An N-terminal signal peptide occupies residues 1–20 (MERPFGCFFILLLISYTVVA). LRR repeat units lie at residues 45–71 (INKV…AWKK), 106–130 (LTVV…LGLM), 131–153 (TDLA…SLSK), 155–178 (ALMY…SLSW), 179–202 (PSLK…IFDK), 204–224 (LDAI…TIGK), 226–248 (KASV…IGNM), and 249–273 (KNLN…GLLN). N260 and N274 each carry an N-linked (GlcNAc...) asparagine glycan. 2 LRR repeats span residues 296–319 (LASV…KFCK) and 321–343 (PNLD…CVPG). The tract at residues 381–847 (KDKCSGGSNG…SPPPPMFQGY (467 aa)) is disordered. Positions 438-484 (PKHESPKPEEPENKHELPKQKESPKPQPSKPEDSPKPEQPKPEESPK) are enriched in basic and acidic residues. Pro residues-rich tracts occupy residues 485-499 (PEQP…PVSP) and 533-642 (VPPP…PPPT). A contains the Ser-Pro(4) repeats region spans residues 522–847 (SPPPPKVEDT…SPPPPMFQGY (326 aa)). Polar residues-rich tracts occupy residues 667 to 682 (QVPT…QILS), 688 to 720 (TPVQ…SPVQ), and 726 to 752 (QAPT…SQAP). Composition is skewed to low complexity over residues 768–783 (PVQS…SSPE) and 797–811 (NPSS…TDTS). Over residues 838 to 847 (SPPPPMFQGY) the composition is skewed to pro residues.

Hydroxylated on proline residues in the S-P-P-P-P repeat. In terms of processing, O-glycosylated on hydroxyprolines. As to expression, expressed in flowers, stamen, pollen, and pollinated carpels (at protein level).

It is found in the secreted. The protein resides in the cell wall. Its function is as follows. Modulates cell morphogenesis by regulating cell wall formation and assembly, and/or growth polarization. In Arabidopsis thaliana (Mouse-ear cress), this protein is Pollen-specific leucine-rich repeat extensin-like protein 2 (PEX2).